Reading from the N-terminus, the 520-residue chain is Probable DNA ligase (520 aa).

Glu213 contributes to the ATP binding site. Lys215 functions as the N6-AMP-lysine intermediate in the catalytic mechanism. Arg220, Arg235, Glu264, Phe300, Arg372, and Lys378 together coordinate ATP.

Belongs to the ATP-dependent DNA ligase family. Requires Mg(2+) as cofactor.

It carries out the reaction ATP + (deoxyribonucleotide)n-3'-hydroxyl + 5'-phospho-(deoxyribonucleotide)m = (deoxyribonucleotide)n+m + AMP + diphosphate.. In terms of biological role, DNA ligase that seals nicks in double-stranded DNA during DNA replication, DNA recombination and DNA repair. This Mycobacterium sp. (strain JLS) protein is Probable DNA ligase.